The following is a 515-amino-acid chain: MTTAQFAVNLNMEGLKGDLLVFCVNQAKERGKIVCHNLVDAQVRAAFDLGDFSGKEGETLLLYPFHSTELSVAGAARILVLGVGDSSDQKEPGGVRDLFRRAGGCIAGQCELLKVETLMVALPETPFLDPGQTAECLVEGICLGDYRFVRYKQPESKEREYLGLKQVFLVSGKTDPAVEKGMDLGRRAALAACEARNMANEPANIWTASAFAAFAQTLAKAHSLGCRILEKSDMERLGMGGILAVNQGSGEPPKLVVLEYLPENRSETLLLVGKGVTFDSGGISLKPAPGMEKMKYDMCGGAAVLCAMQAVAEERPHVGVVAIVPATDNLSGGLAVKPGDVIRHFNGKTAEIVNTDAEGRMILADALAWGINEYNPCCVVDLATLTGAVVMGLGHHYSGIMGNNDALARCLEDAGEKAGEPLWRLPLGKAYAKQIESKVADIKNIGGKSAGAITAAAYLENFVGDTPWVHMDIAGTAWDFTEKTYIPKDGPSGIGVRTLVSLIRNWQPGTIVSSR.

Residues K274 and D279 each contribute to the Mn(2+) site. K286 is a catalytic residue. 3 residues coordinate Mn(2+): D297, D356, and E358. The active site involves R360.

Belongs to the peptidase M17 family. Requires Mn(2+) as cofactor.

It localises to the cytoplasm. It carries out the reaction Release of an N-terminal amino acid, Xaa-|-Yaa-, in which Xaa is preferably Leu, but may be other amino acids including Pro although not Arg or Lys, and Yaa may be Pro. Amino acid amides and methyl esters are also readily hydrolyzed, but rates on arylamides are exceedingly low.. It catalyses the reaction Release of an N-terminal amino acid, preferentially leucine, but not glutamic or aspartic acids.. Functionally, presumably involved in the processing and regular turnover of intracellular proteins. Catalyzes the removal of unsubstituted N-terminal amino acids from various peptides. The sequence is that of Probable cytosol aminopeptidase from Desulforapulum autotrophicum (strain ATCC 43914 / DSM 3382 / VKM B-1955 / HRM2) (Desulfobacterium autotrophicum).